A 135-amino-acid polypeptide reads, in one-letter code: Retinol-binding protein 5 (135 aa).

This sequence belongs to the calycin superfamily. Fatty-acid binding protein (FABP) family.

It localises to the cytoplasm. Functionally, intracellular transport of retinol. This is Retinol-binding protein 5 (RBP5) from Pongo abelii (Sumatran orangutan).